We begin with the raw amino-acid sequence, 394 residues long: Acid ceramidase (394 aa).

The signal sequence occupies residues 1–18 (MRGQSLLTWVLAAAVTCA). A disulfide bond links cysteine 30 and cysteine 339. The Nucleophile role is filled by cysteine 142. Residues asparagine 172, asparagine 194, asparagine 258, asparagine 341, and asparagine 347 are each glycosylated (N-linked (GlcNAc...) asparagine). An intrachain disulfide couples cysteine 387 to cysteine 391.

It belongs to the acid ceramidase family. Heterodimer; disulfide-linked. The heterodimer is composed of the disulfide-linked alpha and beta chains produced by autocatalytic cleavage of the precursor. In terms of processing, N-glycosylated. Proteolytically cleaved into two chains alpha and beta that remain associated via a disulfide bond. Cleavage gives rise to a conformation change that activates the enzyme. The same catalytic Cys residue mediates the autoproteolytic cleavage and subsequent hydrolysis of lipid substrates. The beta chain may undergo an additional C-terminal processing. As to expression, widely expressed.

The protein resides in the lysosome. The protein localises to the secreted. It catalyses the reaction an N-acylsphing-4-enine + H2O = sphing-4-enine + a fatty acid. It carries out the reaction N-dodecanoylsphing-4-enine + H2O = dodecanoate + sphing-4-enine. The catalysed reaction is N-(9Z-octadecenoyl)-sphing-4-enine + H2O = sphing-4-enine + (9Z)-octadecenoate. The enzyme catalyses N-tetradecanoylsphing-4-enine + H2O = tetradecanoate + sphing-4-enine. It catalyses the reaction N-hexadecanoylsphing-4-enine + H2O = sphing-4-enine + hexadecanoate. It carries out the reaction N-octadecanoylsphing-4-enine + H2O = sphing-4-enine + octadecanoate. The catalysed reaction is N-dodecanoyl-(4R)-hydroxysphinganine + H2O = (4R)-hydroxysphinganine + dodecanoate. The enzyme catalyses N-(dodecanoyl)-sphinganine + H2O = dodecanoate + sphinganine. It catalyses the reaction N-(acetyl)-sphing-4-enine + H2O = sphing-4-enine + acetate. It carries out the reaction N-(hexanoyl)sphing-4-enine + H2O = hexanoate + sphing-4-enine. The catalysed reaction is N-octanoylsphing-4-enine + H2O = octanoate + sphing-4-enine. The enzyme catalyses N-dodecanoylethanolamine + H2O = dodecanoate + ethanolamine. It functions in the pathway lipid metabolism; sphingolipid metabolism. Its function is as follows. Lysosomal ceramidase that hydrolyzes sphingolipid ceramides into sphingosine and free fatty acids at acidic pH. Ceramides, sphingosine, and its phosphorylated form sphingosine-1-phosphate are bioactive lipids that mediate cellular signaling pathways regulating several biological processes including cell proliferation, apoptosis and differentiation. Has a higher catalytic efficiency towards C12-ceramides versus other ceramides. Also catalyzes the reverse reaction allowing the synthesis of ceramides from fatty acids and sphingosine. For the reverse synthetic reaction, the natural sphingosine D-erythro isomer is more efficiently utilized as a substrate compared to D-erythro-dihydrosphingosine and D-erythro-phytosphingosine, while the fatty acids with chain lengths of 12 or 14 carbons are the most efficiently used. Also has an N-acylethanolamine hydrolase activity. By regulating the levels of ceramides, sphingosine and sphingosine-1-phosphate in the epidermis, mediates the calcium-induced differentiation of epidermal keratinocytes. Also indirectly regulates tumor necrosis factor/TNF-induced apoptosis. By regulating the intracellular balance between ceramides and sphingosine, in adrenocortical cells, probably also acts as a regulator of steroidogenesis. This is Acid ceramidase from Mus musculus (Mouse).